The primary structure comprises 411 residues: Serpin A3-3 (411 aa).

Positions 1–24 (MRAERLSPLLALGLLVAGIRSVHC) are cleaved as a signal peptide. Asn-100, Asn-180, Asn-230, Asn-264, and Asn-318 each carry an N-linked (GlcNAc...) asparagine glycan.

The protein belongs to the serpin family. Homodimer.

The protein localises to the cytoplasmic vesicle. Its subcellular location is the secretory vesicle. It localises to the chromaffin granule. It is found in the secreted. In terms of biological role, serine protease inhibitor. Strongly inhibits elastase and trypsin stoichiometrically at the molar ratio of 1:1. Acts as a moderate inhibitor of plasmin and chymotrypsin. Does not inhibit thrombin, urokinase, kallikrein, tissue plasminogen activator, cathepsin G or the cysteine proteases papain, cathepsin B or cathepsin L. This chain is Serpin A3-3 (SERPINA3-3), found in Bos taurus (Bovine).